A 111-amino-acid chain; its full sequence is Nucleoid-associated protein TTE0040 (111 aa).

The protein belongs to the YbaB/EbfC family. As to quaternary structure, homodimer.

It localises to the cytoplasm. The protein localises to the nucleoid. Its function is as follows. Binds to DNA and alters its conformation. May be involved in regulation of gene expression, nucleoid organization and DNA protection. The polypeptide is Nucleoid-associated protein TTE0040 (Caldanaerobacter subterraneus subsp. tengcongensis (strain DSM 15242 / JCM 11007 / NBRC 100824 / MB4) (Thermoanaerobacter tengcongensis)).